We begin with the raw amino-acid sequence, 434 residues long: Beta-enolase (434 aa).

Ala2 is modified (N-acetylalanine). Position 72 is a phosphothreonine (Thr72). Residues Ser83 and Ser157 each carry the phosphoserine modification. Residues His158 and Glu167 each coordinate substrate. Residue Ser176 is modified to Phosphoserine. At Thr205 the chain carries Phosphothreonine. Glu210 serves as the catalytic Proton donor. Thr229 carries the phosphothreonine modification. Tyr236 carries the phosphotyrosine modification. Asp245 is a Mg(2+) binding site. A Phosphoserine modification is found at Ser263. Positions 293 and 318 each coordinate substrate. The Mg(2+) site is built by Glu293 and Asp318. The active-site Proton acceptor is the Lys343. Residues 370–373 and Lys394 contribute to the substrate site; that span reads SHRS.

Belongs to the enolase family. Mammalian enolase is composed of 3 isozyme subunits, alpha, beta and gamma, which can form homodimers or heterodimers which are cell-type and development-specific. Interacts with PNKD. It depends on Mg(2+) as a cofactor.

The protein localises to the cytoplasm. It carries out the reaction (2R)-2-phosphoglycerate = phosphoenolpyruvate + H2O. The protein operates within carbohydrate degradation; glycolysis; pyruvate from D-glyceraldehyde 3-phosphate: step 4/5. Functionally, glycolytic enzyme that catalyzes the conversion of 2-phosphoglycerate to phosphoenolpyruvate. Appears to have a function in striated muscle development and regeneration. The protein is Beta-enolase (ENO3) of Bos taurus (Bovine).